The sequence spans 176 residues: dCTP deaminase (176 aa).

Residues 99–104 (RSTLAR) and Asp-115 contribute to the dCTP site. Glu-125 acts as the Proton donor/acceptor in catalysis. Residue Gln-163 coordinates dCTP.

This sequence belongs to the dCTP deaminase family. As to quaternary structure, homotrimer.

The catalysed reaction is dCTP + H2O + H(+) = dUTP + NH4(+). It functions in the pathway pyrimidine metabolism; dUMP biosynthesis; dUMP from dCTP (dUTP route): step 1/2. Catalyzes the deamination of dCTP to dUTP. The sequence is that of dCTP deaminase from Pyrobaculum aerophilum (strain ATCC 51768 / DSM 7523 / JCM 9630 / CIP 104966 / NBRC 100827 / IM2).